A 164-amino-acid chain; its full sequence is PTS system sorbose-specific EIIB component (164 aa).

The PTS EIIB type-4 domain occupies 1 to 164 (MQITLARIDD…DKINETAFCE (164 aa)). The active-site Pros-phosphohistidine intermediate is the H14. At H14 the chain carries Phosphohistidine; by EIIA.

In terms of assembly, dimer of dimers.

Its subcellular location is the cytoplasm. The catalysed reaction is keto-L-sorbose(out) + N(pros)-phospho-L-histidyl-[protein] = L-sorbose 1-phosphate(in) + L-histidyl-[protein]. The phosphoenolpyruvate-dependent sugar phosphotransferase system (PTS), a major carbohydrate active transport system, catalyzes the phosphorylation of incoming sugar substrates concomitant with their translocation across the cell membrane. The enzyme II SorABFM PTS system is involved in L-sorbose transport. The chain is PTS system sorbose-specific EIIB component from Klebsiella pneumoniae.